Here is a 363-residue protein sequence, read N- to C-terminus: Ribonuclease P protein subunit p40 (363 aa).

Component of nuclear RNase P and RNase MRP ribonucleoproteins. RNase P consists of a catalytic RNA moiety and about 10 protein subunits; POP1, POP4, POP5, POP7, RPP14, RPP21, RPP25, RPP30, RPP38 and RPP40. Within the RNase P complex, POP1, POP7 and RPP25 form the 'finger' subcomplex, POP5, RPP14, RPP40 and homodimeric RPP30 form the 'palm' subcomplex, and RPP21, POP4 and RPP38 form the 'wrist' subcomplex. All subunits of the RNase P complex interact with the catalytic RNA. Several subunits of RNase P are also part of the RNase MRP complex. RNase MRP consists of a catalytic RNA moiety and about 8 protein subunits; POP1, POP7, RPP25, RPP30, RPP38, RPP40 and possibly also POP4 and POP5.

It is found in the nucleus. Its subcellular location is the nucleolus. Functionally, component of ribonuclease P, a ribonucleoprotein complex that generates mature tRNA molecules by cleaving their 5'-ends. Also a component of the MRP ribonuclease complex, which cleaves pre-rRNA sequences. The polypeptide is Ribonuclease P protein subunit p40 (Rpp40) (Rattus norvegicus (Rat)).